A 144-amino-acid polypeptide reads, in one-letter code: 3-dehydroquinate dehydratase (144 aa).

Tyr-22 acts as the Proton acceptor in catalysis. Substrate contacts are provided by Asn-73, His-79, and Asp-86. The Proton donor role is filled by His-99. Substrate contacts are provided by residues 100 to 101 (LS) and Arg-110.

This sequence belongs to the type-II 3-dehydroquinase family. Homododecamer.

It carries out the reaction 3-dehydroquinate = 3-dehydroshikimate + H2O. Its pathway is metabolic intermediate biosynthesis; chorismate biosynthesis; chorismate from D-erythrose 4-phosphate and phosphoenolpyruvate: step 3/7. Functionally, catalyzes a trans-dehydration via an enolate intermediate. The polypeptide is 3-dehydroquinate dehydratase (Geotalea daltonii (strain DSM 22248 / JCM 15807 / FRC-32) (Geobacter daltonii)).